The chain runs to 233 residues: 3-dehydroquinate dehydratase (233 aa).

Residues Glu-34–Arg-36 and Arg-64 each bind 3-dehydroquinate. Catalysis depends on His-118, which acts as the Proton donor/acceptor. Lys-145 acts as the Schiff-base intermediate with substrate in catalysis. The 3-dehydroquinate site is built by Arg-185, Ser-205, and Gln-209.

Belongs to the type-I 3-dehydroquinase family. In terms of assembly, homodimer.

It catalyses the reaction 3-dehydroquinate = 3-dehydroshikimate + H2O. It functions in the pathway metabolic intermediate biosynthesis; chorismate biosynthesis; chorismate from D-erythrose 4-phosphate and phosphoenolpyruvate: step 3/7. In terms of biological role, involved in the third step of the chorismate pathway, which leads to the biosynthesis of aromatic amino acids. Catalyzes the cis-dehydration of 3-dehydroquinate (DHQ) and introduces the first double bond of the aromatic ring to yield 3-dehydroshikimate. The chain is 3-dehydroquinate dehydratase from Coxiella burnetii (strain CbuK_Q154) (Coxiella burnetii (strain Q154)).